The primary structure comprises 220 residues: 7-cyano-7-deazaguanine synthase (220 aa).

Position 7 to 17 (7 to 17 (LSGGLDSAVCL)) interacts with ATP. Zn(2+) is bound by residues Cys-191, Cys-199, Cys-202, and Cys-205.

It belongs to the QueC family. Homodimer. Requires Zn(2+) as cofactor.

The catalysed reaction is 7-carboxy-7-deazaguanine + NH4(+) + ATP = 7-cyano-7-deazaguanine + ADP + phosphate + H2O + H(+). The protein operates within purine metabolism; 7-cyano-7-deazaguanine biosynthesis. Catalyzes the ATP-dependent conversion of 7-carboxy-7-deazaguanine (CDG) to 7-cyano-7-deazaguanine (preQ(0)). The sequence is that of 7-cyano-7-deazaguanine synthase from Desulforudis audaxviator (strain MP104C).